The following is a 428-amino-acid chain: Dihydroorotase (428 aa).

Residues His-61 and His-63 each contribute to the Zn(2+) site. Residues His-63 to Arg-65 and Asn-95 each bind substrate. Positions 153, 180, and 233 each coordinate Zn(2+). Asn-279 lines the substrate pocket. A Zn(2+)-binding site is contributed by Asp-306. Residue Asp-306 is part of the active site. Substrate is bound by residues His-310 and Phe-324–Gly-325.

Belongs to the metallo-dependent hydrolases superfamily. DHOase family. Class I DHOase subfamily. Zn(2+) is required as a cofactor.

It catalyses the reaction (S)-dihydroorotate + H2O = N-carbamoyl-L-aspartate + H(+). It participates in pyrimidine metabolism; UMP biosynthesis via de novo pathway; (S)-dihydroorotate from bicarbonate: step 3/3. In terms of biological role, catalyzes the reversible cyclization of carbamoyl aspartate to dihydroorotate. This Geobacillus thermodenitrificans (strain NG80-2) protein is Dihydroorotase.